The chain runs to 508 residues: Hydroxymethylglutaryl-CoA synthase, mitochondrial (508 aa).

The N-terminal 37 residues, 1–37 (MQRLLAPARRVLQVKRVMQESSLSPAHLLPAAQQRFS), are a transit peptide targeting the mitochondrion. Residue Lys52 is modified to N6-succinyllysine. Positions 80 and 81 each coordinate (3S)-3-hydroxy-3-methylglutaryl-CoA. Lys83 and Lys118 each carry N6-acetyllysine; alternate. Residues Lys83 and Lys118 each carry the N6-succinyllysine; alternate modification. Glu132 serves as the catalytic Proton donor/acceptor. The (3S)-3-hydroxy-3-methylglutaryl-CoA site is built by Cys166, Asn204, and Thr208. The Acyl-thioester intermediate role is filled by Cys166. Residue Lys221 is modified to N6-succinyllysine. Lys243 is modified (N6-acetyllysine). N6-acetyllysine; alternate is present on Lys256. Lys256 bears the N6-succinyllysine; alternate mark. (3S)-3-hydroxy-3-methylglutaryl-CoA-binding residues include Ser258 and His301. His301 (proton donor/acceptor) is an active-site residue. N6-acetyllysine is present on Lys306. Lys310 lines the (3S)-3-hydroxy-3-methylglutaryl-CoA pocket. Lys310 and Lys327 each carry N6-acetyllysine; alternate. N6-succinyllysine; alternate occurs at positions 310 and 327. N6-succinyllysine is present on Lys333. Lys342, Lys350, Lys354, and Lys358 each carry N6-acetyllysine; alternate. An N6-succinyllysine; alternate mark is found at Lys342, Lys350, Lys354, and Lys358. Residues Asn380 and Ser414 each contribute to the (3S)-3-hydroxy-3-methylglutaryl-CoA site. Lys427 bears the N6-acetyllysine mark. Ser433 carries the phosphoserine modification. Position 437 is an N6-acetyllysine (Lys437). Ser440 carries the post-translational modification Phosphoserine. Lys447 is modified (N6-acetyllysine; alternate). An N6-succinyllysine; alternate modification is found at Lys447. Position 456 is a phosphoserine (Ser456). An N6-acetyllysine; alternate modification is found at Lys473. The residue at position 473 (Lys473) is an N6-succinyllysine; alternate. Ser477 carries the phosphoserine modification.

This sequence belongs to the thiolase-like superfamily. HMG-CoA synthase family. In terms of assembly, homodimer. In terms of processing, succinylated. Desuccinylated by SIRT5. Succinylation, at least at Lys-83 and Lys-310, inhibits the enzymatic activity. In terms of tissue distribution, liver and kidney.

It is found in the mitochondrion. It catalyses the reaction acetoacetyl-CoA + acetyl-CoA + H2O = (3S)-3-hydroxy-3-methylglutaryl-CoA + CoA + H(+). The protein operates within metabolic intermediate biosynthesis; (R)-mevalonate biosynthesis; (R)-mevalonate from acetyl-CoA: step 2/3. Its function is as follows. Catalyzes the first irreversible step in ketogenesis, condensing acetyl-CoA to acetoacetyl-CoA to form HMG-CoA, which is converted by HMG-CoA reductase (HMGCR) into mevalonate. In Rattus norvegicus (Rat), this protein is Hydroxymethylglutaryl-CoA synthase, mitochondrial (Hmgcs2).